The primary structure comprises 114 residues: Nucleoid-associated protein SGR_3378 (114 aa).

This sequence belongs to the YbaB/EbfC family. Homodimer.

The protein localises to the cytoplasm. Its subcellular location is the nucleoid. Functionally, binds to DNA and alters its conformation. May be involved in regulation of gene expression, nucleoid organization and DNA protection. The chain is Nucleoid-associated protein SGR_3378 from Streptomyces griseus subsp. griseus (strain JCM 4626 / CBS 651.72 / NBRC 13350 / KCC S-0626 / ISP 5235).